We begin with the raw amino-acid sequence, 808 residues long: Zinc finger protein 841 (808 aa).

A Glycyl lysine isopeptide (Lys-Gly) (interchain with G-Cter in SUMO2) cross-link involves residue Lys137. The C2H2-type 1; degenerate zinc-finger motif lies at 145 to 167 (YIGNECGKAFRVSSSLINHQMIH). Residues 173–195 (YRCNESGKAFHRGSLLTVHQIVH) form a C2H2-type 2; degenerate zinc finger. C2H2-type zinc fingers lie at residues 201 to 223 (YQCD…RRSH), 229 to 251 (YICN…QRIH), 257 to 279 (YKCN…QTVH), 285 to 307 (YKCN…HIIH), 313 to 335 (YTCD…QIIH), 341 to 363 (YKCN…RRIH), 369 to 391 (YKCN…QRVH), 397 to 419 (YKCN…QRIH), 425 to 447 (YKCN…MRCH), 453 to 475 (LHCN…QRMH), 481 to 503 (YKCN…RRSH), 509 to 531 (FQCN…RKIH), and 537 to 559 (YKCN…LVIH). Glycyl lysine isopeptide (Lys-Gly) (interchain with G-Cter in SUMO2) cross-links involve residues Lys554 and Lys579. The segment at 565 to 587 (YHCNEFGEAFIQSSKLARYHRNP) adopts a C2H2-type 16; degenerate zinc-finger fold. 7 C2H2-type zinc fingers span residues 593 to 615 (HKCS…QRRH), 621 to 643 (YKCI…RRIH), 649 to 671 (YKCN…WSIH), 677 to 699 (YKCN…QMMH), 705 to 727 (YKCN…QRNH), 733 to 755 (YKCM…QRIH), and 761 to 783 (YKCN…QIKH). Lys791 is covalently cross-linked (Glycyl lysine isopeptide (Lys-Gly) (interchain with G-Cter in SUMO2)).

It belongs to the krueppel C2H2-type zinc-finger protein family.

The protein localises to the nucleus. Functionally, may be involved in transcriptional regulation. The sequence is that of Zinc finger protein 841 (ZNF841) from Homo sapiens (Human).